Consider the following 926-residue polypeptide: Tyrosine-protein phosphatase non-receptor type 4 (926 aa).

The FERM domain maps to 29 to 312 (VVCNILLLDN…EHHTFFRLDR (284 aa)). 2 disordered regions span residues 380–412 (DDRL…TRLR) and 430–475 (EVFV…KNSW). Composition is skewed to polar residues over residues 398 to 408 (NHRNSTFTQEG) and 430 to 456 (EVFV…SQET). The residue at position 474 (Ser-474) is a Phosphoserine. A PDZ domain is found at 517 to 589 (LIRMKPDENG…DQVVLFIKAS (73 aa)). The Tyrosine-protein phosphatase domain occupies 655–911 (VLTQFDQLYR…RFVCEAILKV (257 aa)). Substrate contacts are provided by residues Asp-820, 852 to 858 (CSAGIGR), and Gln-896. The active-site Phosphocysteine intermediate is the Cys-852.

The protein belongs to the protein-tyrosine phosphatase family. Non-receptor class subfamily. As to quaternary structure, interacts with MAPK12 (via C-terminus); this interaction abolishes PTPN4 catalytic autoinhibition and thus activates the phosphatase activity. In terms of assembly, (Microbial infection) Interacts with attenuated rabies virus protein G; this interaction is required for virally-induced apoptosis. Post-translationally, highly phosphorylated on serine and threonine residues but not on tyrosines. In terms of processing, cleaved and activated by calpain I/CAPN1.

Its subcellular location is the cell membrane. It localises to the cytoplasm. The protein resides in the cytoskeleton. The enzyme catalyses O-phospho-L-tyrosyl-[protein] + H2O = L-tyrosyl-[protein] + phosphate. In terms of biological role, phosphatase that plays a role in immunity, learning, synaptic plasticity or cell homeostasis. Regulates neuronal cell homeostasis by protecting neurons against apoptosis. Negatively regulates TLR4-induced interferon beta production by dephosphorylating adapter TICAM2 and inhibiting subsequent TRAM-TRIF interaction. Also dephosphorylates the immunoreceptor tyrosine-based activation motifs/ITAMs of the TCR zeta subunit and thereby negatively regulates TCR-mediated signaling pathway. May act at junctions between the membrane and the cytoskeleton. This is Tyrosine-protein phosphatase non-receptor type 4 (PTPN4) from Homo sapiens (Human).